A 119-amino-acid polypeptide reads, in one-letter code: Ribonuclease P protein component (119 aa).

This sequence belongs to the RnpA family. Consists of a catalytic RNA component (M1 or rnpB) and a protein subunit.

The enzyme catalyses Endonucleolytic cleavage of RNA, removing 5'-extranucleotides from tRNA precursor.. Functionally, RNaseP catalyzes the removal of the 5'-leader sequence from pre-tRNA to produce the mature 5'-terminus. It can also cleave other RNA substrates such as 4.5S RNA. The protein component plays an auxiliary but essential role in vivo by binding to the 5'-leader sequence and broadening the substrate specificity of the ribozyme. This is Ribonuclease P protein component from Syntrophus aciditrophicus (strain SB).